Reading from the N-terminus, the 90-residue chain is uncharacterized protein (90 aa).

Helical transmembrane passes span 17 to 37 and 55 to 75; these read ILSM…IYLV and ICFG…WGIA.

The protein localises to the membrane. This is an uncharacterized protein from Schizosaccharomyces pombe (strain 972 / ATCC 24843) (Fission yeast).